A 968-amino-acid chain; its full sequence is A disintegrin and metalloproteinase with thrombospondin motifs 1 (968 aa).

2 disordered regions span residues 1–23 and 177–253; these read MQPK…DVQR and APAV…RKKR. The first 48 residues, 1-48, serve as a signal peptide directing secretion; sequence MQPKVPLGSRKQKPCSDMGDVQRAARSRGSLSAHMLLLLLASITMLLC. Positions 49–253 are excised as a propeptide; the sequence is ARGAHGRPTE…SGPGSIRKKR (205 aa). The Cysteine switch motif lies at 204–211; it reads AKCGVMDD. Residue Cys-206 coordinates Zn(2+). Residues 214 to 229 are compositionally biased toward polar residues; the sequence is LPTSDSRPESQNTRNQ. In terms of domain architecture, Peptidase M12B spans 259-468; that stretch reads RYVETMLVAD…GHGECLMDKP (210 aa). Ca(2+) is bound by residues Glu-262, Asp-345, and Asp-352. 4 disulfides stabilise this stretch: Cys-334-Cys-386, Cys-363-Cys-368, Cys-380-Cys-463, and Cys-418-Cys-447. Residue His-402 coordinates Zn(2+). Glu-403 is an active-site residue. Zn(2+) is bound by residues His-406 and His-412. The Ca(2+) site is built by Cys-463 and Asp-466. Residues 477-559 enclose the Disintegrin domain; sequence DLPGTLYDAN…TDMKHFATPV (83 aa). Intrachain disulfides connect Cys-489-Cys-512, Cys-500-Cys-522, Cys-507-Cys-541, and Cys-535-Cys-546. Asn-548 is a glycosylation site (N-linked (GlcNAc...) asparagine). Residues 560–615 enclose the TSP type-1 1 domain; that stretch reads HGSWGPWGPWGDCSRTCGGGVQYTMRECDNPVPKNGGKYCEGKRVRYRSCNIEDCP. Cystine bridges form between Cys-572/Cys-609, Cys-576/Cys-614, and Cys-587/Cys-599. Residues Asn-721, Asn-765, and Asn-783 are each glycosylated (N-linked (GlcNAc...) asparagine). Residues 726 to 850 are spacer; that stretch reads KKMSGIVTST…YFMKKKTESF (125 aa). TSP type-1 domains are found at residues 855-911 and 912-968; these read TFSE…LPCP and HWQV…TQCS. Residue Asn-946 is glycosylated (N-linked (GlcNAc...) asparagine).

Zn(2+) is required as a cofactor. Post-translationally, the precursor is cleaved by a furin endopeptidase. Glycosylated. Can be O-fucosylated by POFUT2 on a serine or a threonine residue found within the consensus sequence C1-X(2)-(S/T)-C2-G of the TSP type-1 repeat domains where C1 and C2 are the first and second cysteine residue of the repeat, respectively. Fucosylated repeats can then be further glycosylated by the addition of a beta-1,3-glucose residue by the glucosyltransferase, B3GALTL. Fucosylation mediates the efficient secretion of ADAMTS family members. Can also be C-glycosylated with one or two mannose molecules on tryptophan residues within the consensus sequence W-X-X-W of the TPRs, and N-glycosylated. These other glycosylations can also facilitate secretion.

The protein localises to the secreted. It is found in the extracellular space. Its subcellular location is the extracellular matrix. Its function is as follows. Metalloprotease which cleaves aggrecan, a cartilage proteoglycan, at the '1691-Glu-|-Leu-1692' site (within the chondroitin sulfate attachment domain), and may be involved in its turnover. Also cleaves COMP. Has angiogenic inhibitor activity. May play a critical role in follicular rupture. This is A disintegrin and metalloproteinase with thrombospondin motifs 1 (Adamts1) from Mus musculus (Mouse).